Here is a 224-residue protein sequence, read N- to C-terminus: Outer envelope pore protein 24, chloroplastic (224 aa).

Methionine 1 is a topological domain (cytoplasmic). Residues 2–11 (KATVKGRYEG) traverse the membrane as a beta stranded segment. The Chloroplast intermembrane segment spans residues 12–16 (DKATA). The beta stranded transmembrane segment at 17-28 (AATLAFTPSAAD) threads the bilayer. Residues 29 to 32 (LRFK) are Cytoplasmic-facing. A beta stranded membrane pass occupies residues 33 to 42 (ASATDAAFAR). The Chloroplast intermembrane portion of the chain corresponds to 43 to 55 (GPSLEGLILTLEK). A beta stranded transmembrane segment spans residues 56–64 (PGSFLLDLK). The Cytoplasmic segment spans residues 65 to 70 (PHSKDV). Residues 71 to 80 (RFQFMNSALL) form a beta stranded membrane-spanning segment. Over 81–101 (LDRRVSLTYTHSTTLSPGPAK) the chain is Chloroplast intermembrane. The beta stranded transmembrane segment at 102–111 (LPARTALDGS) threads the bilayer. Topologically, residues 112–116 (LTFDP) are cytoplasmic. A beta stranded membrane pass occupies residues 117-126 (ANKLSLSHTL). Topologically, residues 127–130 (GSSG) are chloroplast intermembrane. The beta stranded transmembrane segment at 131 to 140 (CRVKYSYAHG) threads the bilayer. Residues 141–154 (QDRLTTIEPCFDTA) are Cytoplasmic-facing. The beta stranded transmembrane segment at 155–166 (NNAWDFAVTRKF) threads the bilayer. The Chloroplast intermembrane segment spans residues 167–169 (QGG). A beta stranded transmembrane segment spans residues 170 to 178 (DAIKATYQA). The Cytoplasmic portion of the chain corresponds to 179–180 (ST). The chain crosses the membrane as a beta stranded span at residues 181–189 (KLLALDWTR). Residues 190-212 (DSKIGASFKVAASFDLSDQSKAP) are Chloroplast intermembrane-facing. Residues 213-222 (KLIAESTWNY) form a beta stranded membrane-spanning segment. At 223–224 (EI) the chain is on the cytoplasmic side.

This sequence belongs to the plastid outer envelope porin OEP24 (TC 1.B.28.1) family. In terms of assembly, homooligomers form large rather nonselective pores in plastidial outer membranes.

It is found in the plastid. It localises to the etioplast membrane. Its subcellular location is the chloroplast outer membrane. Its function is as follows. High-conductance voltage-dependent solute channel with a slight selectivity for cations transporting triosephosphates, dicarboxylic acids, ATP, inorganic phosphate (Pi), sugars, and positively or negatively charged amino acids. The protein is Outer envelope pore protein 24, chloroplastic (OEP24) of Oryza sativa subsp. japonica (Rice).